Consider the following 505-residue polypeptide: Glycerol kinase (505 aa).

Threonine 12 lines the ADP pocket. ATP is bound by residues threonine 12, threonine 13, and serine 14. Threonine 12 serves as a coordination point for sn-glycerol 3-phosphate. Arginine 16 is a binding site for ADP. Residues arginine 82, glutamate 83, tyrosine 134, and aspartate 246 each contribute to the sn-glycerol 3-phosphate site. Arginine 82, glutamate 83, tyrosine 134, aspartate 246, and glutamine 247 together coordinate glycerol. ADP contacts are provided by threonine 268 and glycine 312. ATP-binding residues include threonine 268, glycine 312, glutamine 316, and glycine 413. ADP is bound by residues glycine 413 and asparagine 417.

Belongs to the FGGY kinase family.

It catalyses the reaction glycerol + ATP = sn-glycerol 3-phosphate + ADP + H(+). It functions in the pathway polyol metabolism; glycerol degradation via glycerol kinase pathway; sn-glycerol 3-phosphate from glycerol: step 1/1. Its activity is regulated as follows. Inhibited by fructose 1,6-bisphosphate (FBP). In terms of biological role, key enzyme in the regulation of glycerol uptake and metabolism. Catalyzes the phosphorylation of glycerol to yield sn-glycerol 3-phosphate. In Beutenbergia cavernae (strain ATCC BAA-8 / DSM 12333 / CCUG 43141 / JCM 11478 / NBRC 16432 / NCIMB 13614 / HKI 0122), this protein is Glycerol kinase.